Here is a 328-residue protein sequence, read N- to C-terminus: MSHVELQPGFDFQQAGKEVLAIERECLAELDQYINQNFTLACEKMFWCKGKVVVMGMGKSGHIGRKMAATFASTGTPSFFVHPGEAAHGDLGMVTPQDVVIAISNSGESSEITALIPVLKRLHVPLICITGCPESSMARAADVHLCVKVAKEACPLGLAPTSSTTATLVMGDALAVALLKARGFTAEDFALSHPGGALGRKLLLRVNDIMHTGDEIPHVKKTASLRDALLEVTRKNLGMTVICDDNMMIEGIFTDGDLRRVFDMGVDVRRLSIADVMTPGGIRVRPGILAVEALNLMQSRHITSVMVADGDHLLGVLHMHDLLRAGVV.

The 143-residue stretch at 42–184 (CEKMFWCKGK…AVALLKARGF (143 aa)) folds into the SIS domain. Substrate is bound by residues 75 to 76 (GT), His82, His88, 114 to 123 (ALIPVLKRLH), 148 to 150 (KVA), Thr222, and Asp275. His82 contributes to the Zn(2+) binding site. The CBS 1 domain occupies 210–268 (MHTGDEIPHVKKTASLRDALLEVTRKNLGMTVICDDNMMIEGIFTDGDLRRVFDMGVDV). The 52-residue stretch at 277–328 (MTPGGIRVRPGILAVEALNLMQSRHITSVMVADGDHLLGVLHMHDLLRAGVV) folds into the CBS 2 domain.

The protein belongs to the SIS family. GutQ/KpsF subfamily. Homotetramer.

It carries out the reaction D-arabinose 5-phosphate = D-ribulose 5-phosphate. The protein operates within carbohydrate biosynthesis; 3-deoxy-D-manno-octulosonate biosynthesis; 3-deoxy-D-manno-octulosonate from D-ribulose 5-phosphate: step 1/3. Its pathway is bacterial outer membrane biogenesis; lipopolysaccharide biosynthesis. Functionally, involved in the biosynthesis of 3-deoxy-D-manno-octulosonate (KDO), a unique 8-carbon sugar component of lipopolysaccharides (LPSs). Catalyzes the reversible aldol-ketol isomerization between D-ribulose 5-phosphate (Ru5P) and D-arabinose 5-phosphate (A5P). The polypeptide is Arabinose 5-phosphate isomerase KdsD (kdsD) (Escherichia coli O6:H1 (strain CFT073 / ATCC 700928 / UPEC)).